Consider the following 296-residue polypeptide: 33 kDa chaperonin (296 aa).

2 cysteine pairs are disulfide-bonded: cysteine 236–cysteine 238 and cysteine 269–cysteine 272.

Belongs to the HSP33 family. In terms of processing, under oxidizing conditions two disulfide bonds are formed involving the reactive cysteines. Under reducing conditions zinc is bound to the reactive cysteines and the protein is inactive.

The protein localises to the cytoplasm. Functionally, redox regulated molecular chaperone. Protects both thermally unfolding and oxidatively damaged proteins from irreversible aggregation. Plays an important role in the bacterial defense system toward oxidative stress. The polypeptide is 33 kDa chaperonin (Lactobacillus helveticus (strain DPC 4571)).